We begin with the raw amino-acid sequence, 589 residues long: Polypeptide N-acetylgalactosaminyltransferase 4 (589 aa).

Over Met-1–Val-11 the chain is Cytoplasmic. Residues Gly-12–Thr-31 traverse the membrane as a helical; Signal-anchor for type II membrane protein segment. Residues Ser-32–Glu-589 are Lumenal-facing. The segment at Ser-33–Thr-73 is disordered. Disulfide bonds link Cys-140–Cys-369, Cys-360–Cys-438, Cys-471–Cys-488, Cys-514–Cys-531, and Cys-553–Cys-571. The interval Met-150–Arg-255 is catalytic subdomain A. Positions 191 and 216 each coordinate substrate. Asp-239 lines the Mn(2+) pocket. Ser-240 is a binding site for substrate. His-241 is a binding site for Mn(2+). The interval Pro-315 to Arg-377 is catalytic subdomain B. Trp-346 is a substrate binding site. Mn(2+) is bound at residue His-374. The substrate site is built by Arg-377, His-380, and Tyr-382. Residues Thr-458–Glu-589 enclose the Ricin B-type lectin domain. An N-linked (GlcNAc...) asparagine glycan is attached at Asn-523.

Belongs to the glycosyltransferase 2 family. GalNAc-T subfamily. Mn(2+) is required as a cofactor.

Its subcellular location is the golgi apparatus membrane. It carries out the reaction L-seryl-[protein] + UDP-N-acetyl-alpha-D-galactosamine = a 3-O-[N-acetyl-alpha-D-galactosaminyl]-L-seryl-[protein] + UDP + H(+). The catalysed reaction is L-threonyl-[protein] + UDP-N-acetyl-alpha-D-galactosamine = a 3-O-[N-acetyl-alpha-D-galactosaminyl]-L-threonyl-[protein] + UDP + H(+). It participates in protein modification; protein glycosylation. Catalyzes the initial reaction in O-linked oligosaccharide biosynthesis, the transfer of an N-acetyl-D-galactosamine residue to a serine or threonine residue on the protein receptor. This chain is Polypeptide N-acetylgalactosaminyltransferase 4 (gly-4), found in Caenorhabditis elegans.